Reading from the N-terminus, the 295-residue chain is Ribosomal RNA small subunit methyltransferase H (295 aa).

S-adenosyl-L-methionine-binding positions include 32 to 34 (GGY), D50, F77, D98, and Q105. A disordered region spans residues 275–295 (KEISENTRSRSAKLRGIVKEE).

It belongs to the methyltransferase superfamily. RsmH family.

The protein localises to the cytoplasm. The enzyme catalyses cytidine(1402) in 16S rRNA + S-adenosyl-L-methionine = N(4)-methylcytidine(1402) in 16S rRNA + S-adenosyl-L-homocysteine + H(+). Its function is as follows. Specifically methylates the N4 position of cytidine in position 1402 (C1402) of 16S rRNA. The sequence is that of Ribosomal RNA small subunit methyltransferase H from Anaplasma phagocytophilum (strain HZ).